Reading from the N-terminus, the 353-residue chain is MTTNNDFYFALLRISILQLLKAQGFDRARPSLVDVMTDLYAKFLSLLASEVSSIAQARCDQDDTIALQDITLALENLGIVKPTNVLDVYDENSELSSSRGMEKFKDWCIYSTQLTDARITALPTVELLQSEEKESDPLSAIPDYLNQLLQNKGAKQKLETKNRKTELIEDLINNNGLDDWIKLVIARQRINMIERASKKESQNVPALPHIAGYKSSILSRHHHTTITNEDRMPSAMTPRDEDALTEIQENPFVTSKLPIMRKENRLENITLSFEDEELESLGEVEGPNQKSQENNNEESFKENNKSLTESPHGDDRDISMFQFDSNVDTKWAEQEDMDSTFQRRTSLDYGGYF.

In terms of domain architecture, Histone-fold spans 11-78 (LLRISILQLL…DITLALENLG (68 aa)). Position 237 is a phosphothreonine (T237). The segment at 279-353 (ESLGEVEGPN…RTSLDYGGYF (75 aa)) is disordered. Positions 283–294 (EVEGPNQKSQEN) are enriched in low complexity. Residues 289-309 (QKSQENNNEESFKENNKSLTE) are a coiled coil. S310 and S346 each carry phosphoserine.

The protein belongs to the TAF3 family. As to quaternary structure, TAF3 heterodimerizes with TAF10. The 1.2 MDa TFIID complex is composed of TATA binding protein (TBP) and the 14 TBP-associated factors. One copy of each TAF1, TAF2, TAF3, TAF7, TAF8, TAF11, TAF13, two copies of each TAF4, TAF5, TAF6, TAF9, TAF10, TAF12, and three copies of TAF14.

It localises to the nucleus. Functionally, functions as a component of the DNA-binding general transcription factor complex TFIID. Binding of TFIID to a promoter (with or without TATA element) is the initial step in pre-initiation complex (PIC) formation. TFIID plays a key role in the regulation of gene expression by RNA polymerase II through different activities such as transcription activator interaction, core promoter recognition and selectivity, TFIIA and TFIIB interaction, chromatin modification (histone acetylation by TAF1), facilitation of DNA opening and initiation of transcription. This Saccharomyces cerevisiae (strain ATCC 204508 / S288c) (Baker's yeast) protein is Transcription initiation factor TFIID subunit 3 (TAF3).